Here is a 224-residue protein sequence, read N- to C-terminus: UPF0758 protein BPUM_2444 (224 aa).

The MPN domain maps to 102-224; that stretch reads VIRTPEDGAN…FVSLKEKGYL (123 aa). Residues His-173, His-175, and Asp-186 each coordinate Zn(2+). The short motif at 173–186 is the JAMM motif element; that stretch reads HNHPSGDPTPSRED.

It belongs to the UPF0758 family.

This is UPF0758 protein BPUM_2444 from Bacillus pumilus (strain SAFR-032).